A 637-amino-acid chain; its full sequence is ATP-dependent zinc metalloprotease FtsH (637 aa).

Residues 1-44 are Cytoplasmic-facing; sequence MAKHSQHSSPPRKLFDTLNDLWQRAKSEAGLSAEGPEGTRRRNN. The chain crosses the membrane as a helical span at residues 45–65; it reads LILYLLLVLSTLYLLNGYQTL. Topologically, residues 66–141 are periplasmic; it reads RNEEIPYSEF…TVRYGSNWFS (76 aa). A helical membrane pass occupies residues 142–162; that stretch reads SLIFNWIVPIVLLTLFWTWMA. The Cytoplasmic portion of the chain corresponds to 163–637; it reads RRMTGGRGFL…VKAVIREAAS (475 aa). 231–238 provides a ligand contact to ATP; it reads GPPGTGKT. Residue H454 participates in Zn(2+) binding. Residue E455 is part of the active site. H458 and D531 together coordinate Zn(2+).

This sequence in the central section; belongs to the AAA ATPase family. It in the C-terminal section; belongs to the peptidase M41 family. As to quaternary structure, homohexamer. It depends on Zn(2+) as a cofactor.

The protein localises to the cell inner membrane. Functionally, acts as a processive, ATP-dependent zinc metallopeptidase for both cytoplasmic and membrane proteins. Plays a role in the quality control of integral membrane proteins. This Methylococcus capsulatus (strain ATCC 33009 / NCIMB 11132 / Bath) protein is ATP-dependent zinc metalloprotease FtsH.